A 668-amino-acid chain; its full sequence is L-type lectin-domain containing receptor kinase I.7 (668 aa).

Residues 1-21 form the signal peptide; it reads MIRGLLLGIIWMIFCVCSSFQ. The Extracellular segment spans residues 22–285; it reads QETPFVYNNF…SSTKKKSTSP (264 aa). Residues 24-256 are legume-lectin like; that stretch reads TPFVYNNFGH…YQYILGWSFS (233 aa). N-linked (GlcNAc...) asparagine glycans are attached at residues asparagine 56, asparagine 125, asparagine 167, asparagine 201, and asparagine 223. The helical transmembrane segment at 286–306 threads the bilayer; the sequence is VLSVLLGLIAFIVLGILVVAY. The Cytoplasmic portion of the chain corresponds to 307–668; the sequence is LYRRNLYSEV…THSVLYGSGR (362 aa). The Protein kinase domain occupies 341-620; the sequence is FNRSEFLGRG…LNGNLALPEF (280 aa). Residues 347–355 and lysine 372 each bind ATP; that span reads LGRGGFGEV. Catalysis depends on aspartate 468, which acts as the Proton acceptor.

In the C-terminal section; belongs to the protein kinase superfamily. Ser/Thr protein kinase family. It in the N-terminal section; belongs to the leguminous lectin family.

It localises to the cell membrane. The enzyme catalyses L-seryl-[protein] + ATP = O-phospho-L-seryl-[protein] + ADP + H(+). The catalysed reaction is L-threonyl-[protein] + ATP = O-phospho-L-threonyl-[protein] + ADP + H(+). Involved in resistance response to the pathogenic oomycetes Phytophthora infestans and Phytophthora capsici. The protein is L-type lectin-domain containing receptor kinase I.7 of Arabidopsis thaliana (Mouse-ear cress).